Here is a 118-residue protein sequence, read N- to C-terminus: Ribonuclease P protein component (118 aa).

The protein belongs to the RnpA family. In terms of assembly, consists of a catalytic RNA component (M1 or rnpB) and a protein subunit.

The enzyme catalyses Endonucleolytic cleavage of RNA, removing 5'-extranucleotides from tRNA precursor.. In terms of biological role, RNaseP catalyzes the removal of the 5'-leader sequence from pre-tRNA to produce the mature 5'-terminus. It can also cleave other RNA substrates such as 4.5S RNA. The protein component plays an auxiliary but essential role in vivo by binding to the 5'-leader sequence and broadening the substrate specificity of the ribozyme. The chain is Ribonuclease P protein component from Mycobacterium sp. (strain KMS).